The primary structure comprises 355 residues: MEKQRLKAQLSSLRVPLFSVPWPGQCSNKAEVIEARMMKWADEHNLLVTDEYRNRVIRTRYGLLAARCYPNAGEVLLQAIADYLVWFFLADDLFVDRVEVATDETIRNLTAMVDVLDLNVAGSPPVFGELAWLDVCQRLRRLLQAEAFERFAQGMRLWATTAALQILNHLRPTPVGIREYQTIRRHTSGLNPCTSLADAANKGSVQACEFYDADVQTLVRQTNNIVCWANDIQSLRIEIHQPGQFRNMVTIYAQQGQSLQDAVETTATRVNKEIAGFCELADAVTARPISDELHGLIDGLEYWIRGYLDWVVHDTMRYADQFIESDADDRRFSAPDLSLLKKNCSSVTESTSSLV.

Mg(2+) contacts are provided by D91 and D96. The DDXXXD motif signature appears at 91-96; the sequence is DDLFVD. R184 is a binding site for substrate. Residues N230, S234, and E238 each contribute to the Mg(2+) site.

It belongs to the terpene synthase family. It depends on Mg(2+) as a cofactor.

It catalyses the reaction (2E,6E)-farnesyl diphosphate + H2O = (+)-corvol ether B + diphosphate. The enzyme catalyses (2E,6E)-farnesyl diphosphate + H2O = (+)-corvol ether A + diphosphate. Terpene synthase that catalyzes the conversion of (2E,6E)-farnesyl diphosphate (FPP) into sesquiterpenes which are important for fungi-environment interactions. Produces a mixture consisting of 8 sesquiterpenes including corvol ethers A and B, as well as traces of epizonarene, gamma-cadinene, delta-cadinene, alpha-cadinene, alpha-cadinol, and an unidentified sesquiterpene. The major product is corvol ether A. The protein is Sesquiterpene synthase MAJ_08936 of Metarhizium majus (strain ARSEF 297).